A 287-amino-acid polypeptide reads, in one-letter code: Lipoyl synthase (287 aa).

[4Fe-4S] cluster contacts are provided by Cys-34, Cys-39, Cys-45, Cys-60, Cys-64, Cys-67, and Ser-273. Residues 46-262 (WNKRHATVMI…KYIAYSKGFL (217 aa)) form the Radical SAM core domain.

This sequence belongs to the radical SAM superfamily. Lipoyl synthase family. Requires [4Fe-4S] cluster as cofactor.

The protein localises to the cytoplasm. The catalysed reaction is [[Fe-S] cluster scaffold protein carrying a second [4Fe-4S](2+) cluster] + N(6)-octanoyl-L-lysyl-[protein] + 2 oxidized [2Fe-2S]-[ferredoxin] + 2 S-adenosyl-L-methionine + 4 H(+) = [[Fe-S] cluster scaffold protein] + N(6)-[(R)-dihydrolipoyl]-L-lysyl-[protein] + 4 Fe(3+) + 2 hydrogen sulfide + 2 5'-deoxyadenosine + 2 L-methionine + 2 reduced [2Fe-2S]-[ferredoxin]. Its pathway is protein modification; protein lipoylation via endogenous pathway; protein N(6)-(lipoyl)lysine from octanoyl-[acyl-carrier-protein]: step 2/2. In terms of biological role, catalyzes the radical-mediated insertion of two sulfur atoms into the C-6 and C-8 positions of the octanoyl moiety bound to the lipoyl domains of lipoate-dependent enzymes, thereby converting the octanoylated domains into lipoylated derivatives. In Wolbachia pipientis wMel, this protein is Lipoyl synthase.